The primary structure comprises 209 residues: A-type ATP synthase subunit D (209 aa).

This sequence belongs to the V-ATPase D subunit family. As to quaternary structure, has multiple subunits with at least A(3), B(3), C, D, E, F, H, I and proteolipid K(x).

The protein localises to the cell membrane. Component of the A-type ATP synthase that produces ATP from ADP in the presence of a proton gradient across the membrane. The polypeptide is A-type ATP synthase subunit D (Archaeoglobus fulgidus (strain ATCC 49558 / DSM 4304 / JCM 9628 / NBRC 100126 / VC-16)).